A 53-amino-acid polypeptide reads, in one-letter code: uncharacterized protein (53 aa).

Belongs to the ELIP/psbS family.

Its subcellular location is the plastid. The protein resides in the chloroplast. Possible role in chlorophyll and/or carotenoid binding. This is an uncharacterized protein from Guillardia theta (Cryptophyte).